We begin with the raw amino-acid sequence, 531 residues long: NADH-quinone oxidoreductase subunit N (531 aa).

A run of 13 helical transmembrane segments spans residues 13–33 (LAPI…EAFA), 45–65 (LALL…AEVI), 85–105 (PALA…LVIA), 150–170 (LFSV…TLFI), 200–220 (YFLL…LLYG), 242–262 (GLLV…VGAV), 289–309 (VAAF…MTWD), 310–330 (IQPF…VLAI), 339–359 (LAYS…AMSP), 365–385 (VFFY…LVAL), 415–435 (VATV…TSGF), 460–480 (ASAA…FTSP), and 496–516 (GFTA…GVWP).

The protein belongs to the complex I subunit 2 family. In terms of assembly, NDH-1 is composed of 14 different subunits. Subunits NuoA, H, J, K, L, M, N constitute the membrane sector of the complex.

It is found in the cell membrane. It carries out the reaction a quinone + NADH + 5 H(+)(in) = a quinol + NAD(+) + 4 H(+)(out). NDH-1 shuttles electrons from NADH, via FMN and iron-sulfur (Fe-S) centers, to quinones in the respiratory chain. The immediate electron acceptor for the enzyme in this species is believed to be a menaquinone. Couples the redox reaction to proton translocation (for every two electrons transferred, four hydrogen ions are translocated across the cytoplasmic membrane), and thus conserves the redox energy in a proton gradient. The protein is NADH-quinone oxidoreductase subunit N of Beutenbergia cavernae (strain ATCC BAA-8 / DSM 12333 / CCUG 43141 / JCM 11478 / NBRC 16432 / NCIMB 13614 / HKI 0122).